We begin with the raw amino-acid sequence, 400 residues long: Acetate kinase (400 aa).

Residue Asn10 coordinates Mg(2+). ATP is bound at residue Lys17. Arg91 contacts substrate. The active-site Proton donor/acceptor is the Asp150. ATP contacts are provided by residues 210 to 214 (HLGNG), 285 to 287 (DCR), and 333 to 337 (GIGEN). Glu387 contacts Mg(2+).

Belongs to the acetokinase family. Homodimer. Requires Mg(2+) as cofactor. It depends on Mn(2+) as a cofactor.

It is found in the cytoplasm. It carries out the reaction acetate + ATP = acetyl phosphate + ADP. It functions in the pathway metabolic intermediate biosynthesis; acetyl-CoA biosynthesis; acetyl-CoA from acetate: step 1/2. Functionally, catalyzes the formation of acetyl phosphate from acetate and ATP. Can also catalyze the reverse reaction. The polypeptide is Acetate kinase (Yersinia pseudotuberculosis serotype IB (strain PB1/+)).